The following is a 340-amino-acid chain: Glyceraldehyde-3-phosphate dehydrogenase (340 aa).

Residues Thr-11–Ile-12 and Gly-109 contribute to the NAD(+) site. D-glyceraldehyde 3-phosphate is bound at residue Ser-138 to Asn-140. Cys-139 functions as the Nucleophile in the catalytic mechanism. Arg-167 is a binding site for NAD(+). Residue His-193–Ala-194 participates in D-glyceraldehyde 3-phosphate binding. Gln-300 contacts NAD(+).

Belongs to the glyceraldehyde-3-phosphate dehydrogenase family. As to quaternary structure, homotetramer.

The protein localises to the cytoplasm. It carries out the reaction D-glyceraldehyde 3-phosphate + phosphate + NADP(+) = (2R)-3-phospho-glyceroyl phosphate + NADPH + H(+). The catalysed reaction is D-glyceraldehyde 3-phosphate + phosphate + NAD(+) = (2R)-3-phospho-glyceroyl phosphate + NADH + H(+). It participates in carbohydrate degradation; glycolysis; pyruvate from D-glyceraldehyde 3-phosphate: step 1/5. The polypeptide is Glyceraldehyde-3-phosphate dehydrogenase (Saccharolobus islandicus (strain Y.N.15.51 / Yellowstone #2) (Sulfolobus islandicus)).